A 244-amino-acid polypeptide reads, in one-letter code: Probable transcriptional regulatory protein Aasi_0624 (244 aa).

It belongs to the TACO1 family.

The protein localises to the cytoplasm. This chain is Probable transcriptional regulatory protein Aasi_0624, found in Amoebophilus asiaticus (strain 5a2).